A 230-amino-acid chain; its full sequence is Leucyl/phenylalanyl-tRNA--protein transferase (230 aa).

This sequence belongs to the L/F-transferase family.

It is found in the cytoplasm. It catalyses the reaction N-terminal L-lysyl-[protein] + L-leucyl-tRNA(Leu) = N-terminal L-leucyl-L-lysyl-[protein] + tRNA(Leu) + H(+). The catalysed reaction is N-terminal L-arginyl-[protein] + L-leucyl-tRNA(Leu) = N-terminal L-leucyl-L-arginyl-[protein] + tRNA(Leu) + H(+). The enzyme catalyses L-phenylalanyl-tRNA(Phe) + an N-terminal L-alpha-aminoacyl-[protein] = an N-terminal L-phenylalanyl-L-alpha-aminoacyl-[protein] + tRNA(Phe). In terms of biological role, functions in the N-end rule pathway of protein degradation where it conjugates Leu, Phe and, less efficiently, Met from aminoacyl-tRNAs to the N-termini of proteins containing an N-terminal arginine or lysine. The polypeptide is Leucyl/phenylalanyl-tRNA--protein transferase (Rhodopseudomonas palustris (strain BisB18)).